The sequence spans 300 residues: 7-methylguanosine phosphate-specific 5'-nucleotidase (300 aa).

Asp41 serves as the catalytic Nucleophile. Residues Asp41 and Asp43 each coordinate Mg(2+). Asp43 functions as the Proton donor in the catalytic mechanism. A CMP-binding site is contributed by Glu88. Glu88 serves as a coordination point for N(7)-methyl-GMP. Substrate is bound by residues Ser156–Ala157 and Lys205. Asp230 contributes to the Mg(2+) binding site. Lys256 is modified (N6-acetyllysine).

Belongs to the pyrimidine 5'-nucleotidase family. In terms of assembly, monomer.

It localises to the cytoplasm. It catalyses the reaction N(7)-methyl-GMP + H2O = N(7)-methylguanosine + phosphate. The catalysed reaction is CMP + H2O = cytidine + phosphate. The enzyme catalyses a ribonucleoside 5'-phosphate + H2O = a ribonucleoside + phosphate. Specifically hydrolyzes 7-methylguanosine monophosphate (m(7)GMP) to 7-methylguanosine and inorganic phosphate. The specific activity for m(7)GMP may protect cells against undesired salvage of m(7)GMP and its incorporation into nucleic acids. Also has weak activity for CMP. UMP and purine nucleotides are poor substrates. This chain is 7-methylguanosine phosphate-specific 5'-nucleotidase (NT5C3B), found in Homo sapiens (Human).